The sequence spans 119 residues: Large ribosomal subunit protein uL18 (119 aa).

This sequence belongs to the universal ribosomal protein uL18 family. As to quaternary structure, part of the 50S ribosomal subunit; part of the 5S rRNA/L5/L18/L25 subcomplex. Contacts the 5S and 23S rRNAs.

In terms of biological role, this is one of the proteins that bind and probably mediate the attachment of the 5S RNA into the large ribosomal subunit, where it forms part of the central protuberance. The protein is Large ribosomal subunit protein uL18 of Chlorobium phaeovibrioides (strain DSM 265 / 1930) (Prosthecochloris vibrioformis (strain DSM 265)).